We begin with the raw amino-acid sequence, 196 residues long: Large ribosomal subunit protein eL15 (196 aa).

A disordered region spans residues 154-196; the sequence is PGHRGRSERGLTSAGVKGRGMRRRGKGTEKCRPSVRANANRAK.

The protein belongs to the eukaryotic ribosomal protein eL15 family.

This is Large ribosomal subunit protein eL15 from Methanospirillum hungatei JF-1 (strain ATCC 27890 / DSM 864 / NBRC 100397 / JF-1).